We begin with the raw amino-acid sequence, 216 residues long: Probable GH family 25 lysozyme 5 (216 aa).

An N-terminal signal peptide occupies residues 1-20; sequence MRFIISLLFVFTLIFNLAFS. Residues 21-216 enclose the Ch-type lysozyme domain; that stretch reads HIGIDVSSGT…GLGIDKNYWE (196 aa). The active site involves aspartate 25. Asparagine 31 carries N-linked (GlcNAc...) asparagine glycosylation. Catalysis depends on residues aspartate 113 and glutamate 115.

This sequence belongs to the glycosyl hydrolase 25 family.

Its subcellular location is the secreted. The enzyme catalyses Hydrolysis of (1-&gt;4)-beta-linkages between N-acetylmuramic acid and N-acetyl-D-glucosamine residues in a peptidoglycan and between N-acetyl-D-glucosamine residues in chitodextrins.. In Dictyostelium discoideum (Social amoeba), this protein is Probable GH family 25 lysozyme 5.